A 116-amino-acid polypeptide reads, in one-letter code: Large ribosomal subunit protein bL19 (116 aa).

Belongs to the bacterial ribosomal protein bL19 family.

Functionally, this protein is located at the 30S-50S ribosomal subunit interface and may play a role in the structure and function of the aminoacyl-tRNA binding site. The polypeptide is Large ribosomal subunit protein bL19 (rplS) (Geobacillus stearothermophilus (Bacillus stearothermophilus)).